Reading from the N-terminus, the 1131-residue chain is Protein TOPLESS (1131 aa).

One can recognise a LisH domain in the interval 4 to 36 (LSRELVFLILQFLDEEKFKETVHKLEQESGFFF). In terms of domain architecture, CTLH spans 34-92 (FFFNMKYFEDEVHNGNWDEVEKYLSGFTKVDDNRYSMKIFFEIRKQKYLEALDKHDRPK). Ser-214 carries the phosphoserine modification. Residues 286–305 (TPPTNASLDYPSADSEHVSK) are disordered. WD repeat units lie at residues 353–393 (SQGS…RLVQ), 415–454 (EPVV…DMRQ), 460–501 (AHVG…KRHT), 504–545 (GHEA…SRVD), 548–591 (APGR…VKRT), 595–634 (FHKR…LLTA), 639–678 (GGLQ…RLLH), 710–756 (DRSA…EPSQ), 766–805 (LRVA…RNAT), 833–871 (NPEE…TMAT), 874–914 (PPPP…VKSK), 917–956 (GHSK…KQRS), 967–1005 (NSAP…CMKQ), 1010–1049 (ESLA…LRCR), and 1060–1102 (LSNS…GKWG). The segment at 1100–1131 (KWGVAPPAENGSASGAPTAPSVGASASDQPQR) is disordered.

As to quaternary structure, tetramer. Homodimer. Interacts (via the LisH domain) with WUS (via the C-terminal domain). Interacts with NINJA/AFPH2. Interacts with IAA1; IAA2; IAA3; IAA4; IAA6; IAA8; IAA9; IAA11; IAA13; IAA14; IAA17; IAA18; IAA26; IAA27 and IAA28. Interacts (via the LisH domain) with IAA12/BDL (via domain I). Can form a complex with IAA12 and ARF5. Interacts with AP2 (via EAR motif) and HDA19. Interacts with TIFY5A/JAZ8 (via EAR motif). Interacts with SPEAR3/TIE1. Interacts with SPL (via EAR motif). Interacts with ZAT2 and ZAT3 (via the EAR motif). Interacts with JAZ13 (via EAR motif). Interacts with GIR1 and GIR2. Expressed in embryo and in extraembryonic tissues. Expressed in inflorescences, flowers, floral meristems, developing anthers and ovules. Detected in the vascular tissues, shoot apical meristem, cotyledons and young leaves. Expressed ubiquitously in the pistils, stamens and pollens.

It localises to the nucleus. Transcriptional corepressor. May repress the expression of root-promoting genes in the top half of the embryo to allow proper differentiation of the shoot pole during the transition stage of embryogenesis. Regulates the expression of PLT1 and PLT2. Negative regulator of jasmonate responses. Negative regulator of auxin responses. Negative regulator of multiple floral organ identity genes. Required for ovule development. The protein is Protein TOPLESS (TPL) of Arabidopsis thaliana (Mouse-ear cress).